The primary structure comprises 415 residues: Squalene synthase 11 (415 aa).

2 consecutive transmembrane segments (helical) span residues 281-301 (AIFR…ALCF) and 392-412 (LIII…SNLP).

Belongs to the phytoene/squalene synthase family. Requires Mg(2+) as cofactor. The cofactor is Mn(2+).

The protein localises to the endoplasmic reticulum membrane. It catalyses the reaction 2 (2E,6E)-farnesyl diphosphate + NADH + H(+) = squalene + 2 diphosphate + NAD(+). The catalysed reaction is 2 (2E,6E)-farnesyl diphosphate + NADPH + H(+) = squalene + 2 diphosphate + NADP(+). The protein operates within terpene metabolism; lanosterol biosynthesis; lanosterol from farnesyl diphosphate: step 1/3. Functionally, component of the triterpene saponins (e.g. ginsenosides or panaxosides) and phytosterols biosynthetic pathways. Catalyzes the biosynthesis of squalene. This is Squalene synthase 11 from Panax ginseng (Korean ginseng).